We begin with the raw amino-acid sequence, 126 residues long: Large ribosomal subunit protein bL20c (126 aa).

Belongs to the bacterial ribosomal protein bL20 family.

Its subcellular location is the plastid. The protein localises to the chloroplast. Functionally, binds directly to 23S ribosomal RNA and is necessary for the in vitro assembly process of the 50S ribosomal subunit. It is not involved in the protein synthesizing functions of that subunit. This chain is Large ribosomal subunit protein bL20c, found in Lactuca sativa (Garden lettuce).